The sequence spans 203 residues: Large ribosomal subunit protein uL22 (203 aa).

Polar residues predominate over residues 138–167 (PENTQSGALSQQSQAEQPQNDPENGVDSQL). The disordered stretch occupies residues 138–203 (PENTQSGALS…TVLAQEKEVK (66 aa)). Over residues 168–177 (SAKTNSTTTA) the composition is skewed to low complexity. Positions 183 to 196 (ADNSTKNDATNTVL) are enriched in polar residues.

This sequence belongs to the universal ribosomal protein uL22 family. Part of the 50S ribosomal subunit.

In terms of biological role, this protein binds specifically to 23S rRNA; its binding is stimulated by other ribosomal proteins, e.g. L4, L17, and L20. It is important during the early stages of 50S assembly. It makes multiple contacts with different domains of the 23S rRNA in the assembled 50S subunit and ribosome. The globular domain of the protein is located near the polypeptide exit tunnel on the outside of the subunit, while an extended beta-hairpin is found that lines the wall of the exit tunnel in the center of the 70S ribosome. This Mesomycoplasma hyopneumoniae (strain 7448) (Mycoplasma hyopneumoniae) protein is Large ribosomal subunit protein uL22.